The chain runs to 124 residues: Small ribosomal subunit protein uS12 (124 aa).

A disordered region spans residues 1–28; the sequence is MPTINQLVRKGRTPKVSKTKAPALKGSP. Residues 9–18 show a composition bias toward basic residues; that stretch reads RKGRTPKVSK. A 3-methylthioaspartic acid modification is found at aspartate 89.

Belongs to the universal ribosomal protein uS12 family. In terms of assembly, part of the 30S ribosomal subunit. Contacts proteins S8 and S17. May interact with IF1 in the 30S initiation complex.

With S4 and S5 plays an important role in translational accuracy. Its function is as follows. Interacts with and stabilizes bases of the 16S rRNA that are involved in tRNA selection in the A site and with the mRNA backbone. Located at the interface of the 30S and 50S subunits, it traverses the body of the 30S subunit contacting proteins on the other side and probably holding the rRNA structure together. The combined cluster of proteins S8, S12 and S17 appears to hold together the shoulder and platform of the 30S subunit. This Paenarthrobacter aurescens (strain TC1) protein is Small ribosomal subunit protein uS12.